A 272-amino-acid chain; its full sequence is HMP-PP phosphatase (272 aa).

D8 serves as the catalytic Nucleophile. The Mg(2+) site is built by D8, D10, and D212.

This sequence belongs to the HAD-like hydrolase superfamily. Cof family. Mg(2+) is required as a cofactor.

It catalyses the reaction 4-amino-2-methyl-5-(diphosphooxymethyl)pyrimidine + H2O = 4-amino-2-methyl-5-(phosphooxymethyl)pyrimidine + phosphate + H(+). Its function is as follows. Catalyzes the hydrolysis of 4-amino-2-methyl-5-hydroxymethylpyrimidine pyrophosphate (HMP-PP) to 4-amino-2-methyl-5-hydroxymethylpyrimidine phosphate (HMP-P). The chain is HMP-PP phosphatase from Salmonella newport (strain SL254).